A 585-amino-acid chain; its full sequence is Arginine--tRNA ligase (585 aa).

Positions 131–141 match the 'HIGH' region motif; that stretch reads ANPTGPMHVGH.

The protein belongs to the class-I aminoacyl-tRNA synthetase family. As to quaternary structure, monomer.

It is found in the cytoplasm. The catalysed reaction is tRNA(Arg) + L-arginine + ATP = L-arginyl-tRNA(Arg) + AMP + diphosphate. In Bartonella quintana (strain Toulouse) (Rochalimaea quintana), this protein is Arginine--tRNA ligase.